Here is a 277-residue protein sequence, read N- to C-terminus: Phosphatidylglycerol--prolipoprotein diacylglyceryl transferase (277 aa).

4 helical membrane-spanning segments follow: residues 18 to 38, 51 to 71, 89 to 109, and 116 to 136; these read ISVKWYGVIIASAVVIALLLA, IIVDLLIWAIPISIISARIYY, IWHGGIAIYGALIGAVLTAII, and ISFWQLADVVAPSLIIAQAIG. Arg-137 is a binding site for a 1,2-diacyl-sn-glycero-3-phospho-(1'-sn-glycerol). Helical transmembrane passes span 177–197, 205–225, and 235–255; these read QPTFLYESLWNVLGFVILLII, GELFLGYVIWYSFGRFFIEGM, and FRVSQALSLLLIVLSIGIIIY.

It belongs to the Lgt family.

It is found in the cell membrane. The catalysed reaction is L-cysteinyl-[prolipoprotein] + a 1,2-diacyl-sn-glycero-3-phospho-(1'-sn-glycerol) = an S-1,2-diacyl-sn-glyceryl-L-cysteinyl-[prolipoprotein] + sn-glycerol 1-phosphate + H(+). Its pathway is protein modification; lipoprotein biosynthesis (diacylglyceryl transfer). In terms of biological role, catalyzes the transfer of the diacylglyceryl group from phosphatidylglycerol to the sulfhydryl group of the N-terminal cysteine of a prolipoprotein, the first step in the formation of mature lipoproteins. This is Phosphatidylglycerol--prolipoprotein diacylglyceryl transferase from Listeria monocytogenes serovar 1/2a (strain ATCC BAA-679 / EGD-e).